We begin with the raw amino-acid sequence, 715 residues long: Formate dehydrogenase H (715 aa).

Residues 1-56 (MKKVVTVCPYCASGCKINLVVDNGKIVRAEAAQGKTNQGTLCLKGYYGWDFINDTQ) enclose the 4Fe-4S Mo/W bis-MGD-type domain. [4Fe-4S] cluster-binding residues include C8, C11, C15, and C42. K44 serves as the catalytic Electron donor/acceptor. The Mo-bis(molybdopterin guanine dinucleotide) site is built by R110, U140, N176, D179, S180, C201, D202, R204, G221, N223, M297, Q335, D404, T408, Q428, D429, S445, D478, R581, E582, H585, S587, Y678, and K679. The active-site Proton donor/acceptor is U140. U140 is a non-standard amino acid (selenocysteine).

It belongs to the prokaryotic molybdopterin-containing oxidoreductase family. Consists of two separable enzymatic activities: a formate dehydrogenase component (FDH-H) and hydrogenase-3. [4Fe-4S] cluster is required as a cofactor. The cofactor is Mo-bis(molybdopterin guanine dinucleotide).

The enzyme catalyses formate + A + H(+) = AH2 + CO2. Inhibited by aerobic conditions. In terms of biological role, decomposes formic acid to hydrogen and carbon dioxide under anaerobic conditions in the absence of exogenous electron acceptors. In Escherichia coli (strain K12), this protein is Formate dehydrogenase H (fdhF).